A 149-amino-acid polypeptide reads, in one-letter code: D-aminoacyl-tRNA deacylase (149 aa).

The short motif at 137–138 (GP) is the Gly-cisPro motif, important for rejection of L-amino acids element.

Belongs to the DTD family. In terms of assembly, homodimer.

The protein resides in the cytoplasm. The enzyme catalyses glycyl-tRNA(Ala) + H2O = tRNA(Ala) + glycine + H(+). It carries out the reaction a D-aminoacyl-tRNA + H2O = a tRNA + a D-alpha-amino acid + H(+). In terms of biological role, an aminoacyl-tRNA editing enzyme that deacylates mischarged D-aminoacyl-tRNAs. Also deacylates mischarged glycyl-tRNA(Ala), protecting cells against glycine mischarging by AlaRS. Acts via tRNA-based rather than protein-based catalysis; rejects L-amino acids rather than detecting D-amino acids in the active site. By recycling D-aminoacyl-tRNA to D-amino acids and free tRNA molecules, this enzyme counteracts the toxicity associated with the formation of D-aminoacyl-tRNA entities in vivo and helps enforce protein L-homochirality. This Alkaliphilus metalliredigens (strain QYMF) protein is D-aminoacyl-tRNA deacylase.